The following is a 598-amino-acid chain: Elongation factor 4 (598 aa).

Residues Ser4–Lys186 enclose the tr-type G domain. GTP-binding positions include Asp16–Thr21 and Asn133–Asp136.

The protein belongs to the TRAFAC class translation factor GTPase superfamily. Classic translation factor GTPase family. LepA subfamily.

The protein resides in the cell inner membrane. It catalyses the reaction GTP + H2O = GDP + phosphate + H(+). Functionally, required for accurate and efficient protein synthesis under certain stress conditions. May act as a fidelity factor of the translation reaction, by catalyzing a one-codon backward translocation of tRNAs on improperly translocated ribosomes. Back-translocation proceeds from a post-translocation (POST) complex to a pre-translocation (PRE) complex, thus giving elongation factor G a second chance to translocate the tRNAs correctly. Binds to ribosomes in a GTP-dependent manner. The chain is Elongation factor 4 from Pelobacter propionicus (strain DSM 2379 / NBRC 103807 / OttBd1).